A 64-amino-acid chain; its full sequence is uncharacterized protein (64 aa).

As to expression, widely expressed; not found in breast.

This is an uncharacterized protein from Homo sapiens (Human).